We begin with the raw amino-acid sequence, 483 residues long: Probable cytochrome P450 517A1 (483 aa).

Residues 1 to 21 form a helical membrane-spanning segment; the sequence is MEIINVFLFLIILFLVKDFVK. Cys429 contributes to the heme binding site.

This sequence belongs to the cytochrome P450 family. Requires heme as cofactor.

The protein localises to the membrane. This is Probable cytochrome P450 517A1 (cyp517A1) from Dictyostelium discoideum (Social amoeba).